The following is a 303-amino-acid chain: Putative S-adenosyl-L-methionine-dependent methyltransferase MSMEG_1479/MSMEI_1443 (303 aa).

S-adenosyl-L-methionine is bound by residues Asp-130 and 159 to 160 (DL).

It belongs to the UPF0677 family.

Exhibits S-adenosyl-L-methionine-dependent methyltransferase activity. This Mycolicibacterium smegmatis (strain ATCC 700084 / mc(2)155) (Mycobacterium smegmatis) protein is Putative S-adenosyl-L-methionine-dependent methyltransferase MSMEG_1479/MSMEI_1443.